The primary structure comprises 226 residues: UPF0758 protein gbs1168 (226 aa).

An MPN domain is found at 103-225; sequence QILSSEQLAR…YYSFREEADI (123 aa). His-174, His-176, and Asp-187 together coordinate Zn(2+). The JAMM motif motif lies at 174-187; the sequence is HNHPSGSPNPSESD.

Belongs to the UPF0758 family.

The sequence is that of UPF0758 protein gbs1168 from Streptococcus agalactiae serotype III (strain NEM316).